The primary structure comprises 966 residues: Protein mes-1 (966 aa).

The signal sequence occupies residues 1 to 19; the sequence is MKIHHFLTLLCTFLPLTTT. Over 20–470 the chain is Extracellular; the sequence is ALTNSTPLSL…QASDIPTSVE (451 aa). N-linked (GlcNAc...) asparagine glycans are attached at residues asparagine 62, asparagine 126, asparagine 183, asparagine 214, asparagine 251, and asparagine 372. A helical transmembrane segment spans residues 471-491; that stretch reads LMAVVLATSAIFALIALFLLY. At 492–966 the chain is on the cytoplasmic side; it reads RKRKRDKKAR…FKSVNVAATV (475 aa). The Protein kinase domain occupies 656-966; the sequence is HNFNERIEKQ…FKSVNVAATV (311 aa). Residues 662 to 670 and lysine 685 each bind ATP; that span reads IEKQAYWLM.

The protein belongs to the protein kinase superfamily.

It is found in the cell membrane. Its function is as follows. During early embryogenesis, controls asymmetric cell division and the asymmetric localization of P granules of germline precursor P2 and its descendant P3. Probably upstream of tyrosine kinase src-1, plays a role in endoderm development by controlling spindle orientation during EMS blastomere cell division. Controls EMS spindle orientation probably by promoting lin-5 and gpr-1/2 enrichment at, and let-99 exclusion from the junction between P2 and EMS cells. This Caenorhabditis elegans protein is Protein mes-1.